The primary structure comprises 416 residues: Inositol polyphosphate multikinase (416 aa).

The disordered stretch occupies residues 1 to 38 (MATEPPSPLRVEAPGPPEMRTSPAIESTPEGTPQPAGG). N-acetylalanine is present on alanine 2. A Phosphoserine modification is found at serine 7. Lysine 75 lines the ATP pocket. A substrate-binding site is contributed by arginine 82. ATP contacts are provided by residues 131–133 (EDV) and aspartate 144. Residues lysine 146, 160–167 (KIQQQVSK), and glutamine 196 contribute to the substrate site. The short motif at 320–330 (RHRKIYTKKHH) is the Nuclear localization signal element. Aspartate 385 contacts ATP. Histidine 388 contacts substrate.

The protein belongs to the inositol phosphokinase (IPK) family. The cofactor is Mg(2+). In terms of tissue distribution, ubiquitous, with the highest expression in skeletal muscle, liver, placenta, lung, peripheral blood leukocytes, kidney, spleen and colon.

The protein resides in the nucleus. It carries out the reaction 1D-myo-inositol 1,4,5-trisphosphate + 2 ATP = 1D-myo-inositol 1,3,4,5,6-pentakisphosphate + 2 ADP + 2 H(+). It catalyses the reaction 1D-myo-inositol 1,3,4,6-tetrakisphosphate + ATP = 1D-myo-inositol 1,3,4,5,6-pentakisphosphate + ADP + H(+). The enzyme catalyses 1-octadecanoyl-2-(5Z,8Z,11Z,14Z)-eicosatetraenoyl-sn-glycero-3-phospho-1D-myo-inositol 4,5-bisphosphate + ATP = 1-octadecanoyl-2-(5Z,8Z,11Z,14Z-eicosatetraenoyl)-sn-glycero-3-phospho-(1D-myo-inositol 3,4,5-triphosphate) + ADP + H(+). The catalysed reaction is a 1,2-diacyl-sn-glycero-3-phospho-(1D-myo-inositol-4,5-bisphosphate) + ATP = a 1,2-diacyl-sn-glycero-3-phospho-(1D-myo-inositol-3,4,5-trisphosphate) + ADP + H(+). It carries out the reaction 1D-myo-inositol 1,4,5,6-tetrakisphosphate + ATP = 1D-myo-inositol 1,3,4,5,6-pentakisphosphate + ADP + H(+). Its pathway is phospholipid metabolism; phosphatidylinositol metabolism. Its activity is regulated as follows. Inhibited by flavonoids that occupy the ATP-binding pocket. Inhibited by myricetin, quercetin, luteolin, kaempferol, isorhamnetin and diosmetin, and to a lesser degree by rhamnetin and apigenin. Functionally, inositol phosphate kinase with a broad substrate specificity. Phosphorylates inositol 1,4,5-trisphosphate (Ins(1,4,5)P3) first to inositol 1,3,4,5-tetrakisphosphate and then to inositol 1,3,4,5,6-pentakisphosphate (Ins(1,3,4,5,6)P5). Phosphorylates inositol 1,3,4,6-tetrakisphosphate (Ins(1,3,4,6)P4). Phosphorylates inositol 1,4,5,6-tetrakisphosphate (Ins(1,4,5,6)P4). Phosphorylates glycero-3-phospho-1D-myo-inositol 4,5-bisphosphate to glycero-3-phospho-1D-myo-inositol 3,4,5-trisphosphate. Plays an important role in MLKL-mediated necroptosis via its role in the biosynthesis of inositol pentakisphosphate (InsP5) and inositol hexakisphosphate (InsP6). Binding of these highly phosphorylated inositol phosphates to MLKL mediates the release of an N-terminal auto-inhibitory region, leading to activation of the kinase. Essential for activated phospho-MLKL to oligomerize and localize to the cell membrane during necroptosis. Required for normal embryonic development, probably via its role in the biosynthesis of inositol 1,3,4,5,6-pentakisphosphate (Ins(1,3,4,5,6)P5) and inositol hexakisphosphate (InsP6). The chain is Inositol polyphosphate multikinase (IPMK) from Homo sapiens (Human).